The primary structure comprises 303 residues: Probable 5-dehydro-4-deoxyglucarate dehydratase (303 aa).

Belongs to the DapA family.

The catalysed reaction is 5-dehydro-4-deoxy-D-glucarate + H(+) = 2,5-dioxopentanoate + CO2 + H2O. It participates in carbohydrate acid metabolism; D-glucarate degradation; 2,5-dioxopentanoate from D-glucarate: step 2/2. The polypeptide is Probable 5-dehydro-4-deoxyglucarate dehydratase (Ectopseudomonas mendocina (strain ymp) (Pseudomonas mendocina)).